A 473-amino-acid polypeptide reads, in one-letter code: Argininosuccinate lyase (473 aa).

It belongs to the lyase 1 family. Argininosuccinate lyase subfamily.

It localises to the cytoplasm. It carries out the reaction 2-(N(omega)-L-arginino)succinate = fumarate + L-arginine. Its pathway is amino-acid biosynthesis; L-arginine biosynthesis; L-arginine from L-ornithine and carbamoyl phosphate: step 3/3. In Bordetella pertussis (strain Tohama I / ATCC BAA-589 / NCTC 13251), this protein is Argininosuccinate lyase.